The chain runs to 126 residues: Probable small nuclear ribonucleoprotein Sm D1 (126 aa).

The Sm domain occupies 2–74 (KLVRFLMKLS…IRYIILPDPL (73 aa)). The tract at residues 86-126 (RKKARAARAGASRGRGRGGMRGGRGGRGRGRGGPRGGGPRR) is disordered. Residues 99–126 (GRGRGGMRGGRGGRGRGRGGPRGGGPRR) are compositionally biased toward basic residues.

The protein belongs to the snRNP core protein family.

It is found in the nucleus. The protein resides in the cytoplasm. It localises to the cytosol. Functionally, plays a role in pre-mRNA splicing as a core component of the spliceosomal U1, U2, U4 and U5 small nuclear ribonucleoproteins (snRNPs), the building blocks of the spliceosome. The sequence is that of Probable small nuclear ribonucleoprotein Sm D1 (snr-3) from Caenorhabditis elegans.